We begin with the raw amino-acid sequence, 494 residues long: Glycerol kinase (494 aa).

T13 is an ADP binding site. The ATP site is built by T13, T14, and S15. T13 contributes to the sn-glycerol 3-phosphate binding site. Residue R17 participates in ADP binding. The sn-glycerol 3-phosphate site is built by R83, E84, Y135, and D244. Residues R83, E84, Y135, D244, and Q245 each contribute to the glycerol site. T266 and G309 together coordinate ADP. 4 residues coordinate ATP: T266, G309, Q313, and G410. ADP contacts are provided by G410 and N414.

The protein belongs to the FGGY kinase family.

The catalysed reaction is glycerol + ATP = sn-glycerol 3-phosphate + ADP + H(+). The protein operates within polyol metabolism; glycerol degradation via glycerol kinase pathway; sn-glycerol 3-phosphate from glycerol: step 1/1. With respect to regulation, inhibited by fructose 1,6-bisphosphate (FBP). Its function is as follows. Key enzyme in the regulation of glycerol uptake and metabolism. Catalyzes the phosphorylation of glycerol to yield sn-glycerol 3-phosphate. This Shewanella baltica (strain OS185) protein is Glycerol kinase.